A 258-amino-acid chain; its full sequence is Mediator of RNA polymerase II transcription subunit 7 (258 aa).

Disordered regions lie at residues 1–39 (MLPG…PPPH) and 202–243 (EKET…PPSV). Acidic residues predominate over residues 203–217 (KETEEDEEMKEDDEE). A compositionally biased stretch (polar residues) spans 220–229 (STSSSEGNQK).

It belongs to the Mediator complex subunit 7 family. Component of the Mediator complex.

Its subcellular location is the nucleus. In terms of biological role, component of the Mediator complex, a coactivator involved in the regulated transcription of nearly all RNA polymerase II-dependent genes. Mediator functions as a bridge to convey information from gene-specific regulatory proteins to the basal RNA polymerase II transcription machinery. Mediator is recruited to promoters by direct interactions with regulatory proteins and serves as a scaffold for the assembly of a functional preinitiation complex with RNA polymerase II and the general transcription factors. The chain is Mediator of RNA polymerase II transcription subunit 7 (let-49) from Caenorhabditis briggsae.